A 446-amino-acid polypeptide reads, in one-letter code: Tubulin alpha-2 chain (446 aa).

An MREC motif motif is present at residues 1–4; the sequence is MREC. GTP contacts are provided by Q11, E68, S137, G141, T142, S176, N203, and N225. Mg(2+) is bound at residue E68. Residue E251 is part of the active site.

The protein belongs to the tubulin family. In terms of assembly, dimer of alpha and beta chains. A typical microtubule is a hollow water-filled tube with an outer diameter of 25 nm and an inner diameter of 15 nM. Alpha-beta heterodimers associate head-to-tail to form protofilaments running lengthwise along the microtubule wall with the beta-tubulin subunit facing the microtubule plus end conferring a structural polarity. Microtubules usually have 13 protofilaments but different protofilament numbers can be found in some organisms and specialized cells. Mg(2+) is required as a cofactor. In terms of processing, some glutamate residues at the C-terminus are polyglycylated, resulting in polyglycine chains on the gamma-carboxyl group. Glycylation is mainly limited to tubulin incorporated into axonemes (cilia and flagella) whereas glutamylation is prevalent in neuronal cells, centrioles, axonemes, and the mitotic spindle. Both modifications can coexist on the same protein on adjacent residues, and lowering polyglycylation levels increases polyglutamylation, and reciprocally. The precise function of polyglycylation is still unclear. Post-translationally, some glutamate residues at the C-terminus are polyglutamylated, resulting in polyglutamate chains on the gamma-carboxyl group. Polyglutamylation plays a key role in microtubule severing by spastin (SPAST). SPAST preferentially recognizes and acts on microtubules decorated with short polyglutamate tails: severing activity by SPAST increases as the number of glutamates per tubulin rises from one to eight, but decreases beyond this glutamylation threshold. As to expression, testis specific.

The protein resides in the cytoplasm. It is found in the cytoskeleton. It carries out the reaction GTP + H2O = GDP + phosphate + H(+). In terms of biological role, tubulin is the major constituent of microtubules, a cylinder consisting of laterally associated linear protofilaments composed of alpha- and beta-tubulin heterodimers. Microtubules grow by the addition of GTP-tubulin dimers to the microtubule end, where a stabilizing cap forms. Below the cap, tubulin dimers are in GDP-bound state, owing to GTPase activity of alpha-tubulin. The protein is Tubulin alpha-2 chain of Gallus gallus (Chicken).